The primary structure comprises 125 residues: Small ribosomal subunit protein eS8 (125 aa).

The protein belongs to the eukaryotic ribosomal protein eS8 family. Part of the 30S ribosomal subunit.

This chain is Small ribosomal subunit protein eS8, found in Methanosarcina barkeri (strain Fusaro / DSM 804).